The sequence spans 402 residues: LIM homeobox transcription factor 1-beta (402 aa).

2 LIM zinc-binding domains span residues Cys56–Asp106 and Cys115–Asp168. Disordered stretches follow at residues Leu176–Gln229 and Pro326–His346. The homeobox DNA-binding region spans Pro219–Ala278. Polar residues predominate over residues Pro326–Thr338.

As to quaternary structure, interacts with DHX9. As to expression, expressed in most tissues. Highest levels in testis, thyroid, duodenum, skeletal muscle, and pancreatic islets.

It is found in the nucleus. In terms of biological role, transcription factor involved in the regulation of podocyte-expressed genes. Essential for the specification of dorsal limb fate at both the zeugopodal and autopodal levels. This is LIM homeobox transcription factor 1-beta (LMX1B) from Homo sapiens (Human).